Here is a 92-residue protein sequence, read N- to C-terminus: Small ribosomal subunit protein uS19c (92 aa).

The protein belongs to the universal ribosomal protein uS19 family.

It is found in the plastid. The protein localises to the chloroplast. In terms of biological role, protein S19 forms a complex with S13 that binds strongly to the 16S ribosomal RNA. This Pisum sativum (Garden pea) protein is Small ribosomal subunit protein uS19c (rps19).